The sequence spans 370 residues: Platelet-derived growth factor D (370 aa).

Positions 1 to 23 (MQRLVLVSILLCANFSCYPDTFA) are cleaved as a signal peptide. Residues 52–170 (REENIQVTSN…PGFKIYYSFV (119 aa)) enclose the CUB domain. A disulfide bridge links C109 with C131. A glycan (N-linked (GlcNAc...) asparagine) is linked at N276. Cystine bridges form between C302/C360 and C306/C362.

It belongs to the PDGF/VEGF growth factor family. Homodimer; disulfide-linked. Interacts with PDGFRB homodimers, and with heterodimers formed by PDGFRA and PDGFRB. Activated by proteolytic cleavage. Proteolytic removal of the N-terminal CUB domain releasing the core domain is necessary for unmasking the receptor-binding epitopes of the core domain. Cleavage after Arg-247 or Arg-249 by urokinase plasminogen activator gives rise to the active form. As to expression, expressed at high levels in developing heart, lung, kidney and some muscle derivatives. Moderately expressed in liver, brain and testis. In the kidney, localized to glomerular mesangial cells and vascular smooth muscle cells. Up-regulated in areas of renal fibrosis. In mice with unilateral ureteral obstruction, expressed in interstitial cells at day 4, with an increased to maximal expression at day 14.

The protein localises to the secreted. Growth factor that plays an essential role in the regulation of embryonic development, cell proliferation, cell migration, survival and chemotaxis. Potent mitogen for cells of mesenchymal origin. Plays an important role in wound healing. Has oncogenic potential and can induce tumor formation. Induces macrophage recruitment, increased interstitial pressure, and blood vessel maturation during angiogenesis. Can initiate events that lead to a mesangial proliferative glomerulonephritis, including influx of monocytes and macrophages and production of extracellular matrix. In Mus musculus (Mouse), this protein is Platelet-derived growth factor D (Pdgfd).